The following is a 1466-amino-acid chain: Immediate-early protein 2 (1466 aa).

8 disordered regions span residues 1-21 (MEPA…MQDY), 223-242 (NRGY…GGNG), 339-370 (YNHP…RGNQ), 428-472 (RCRS…VTKA), 517-965 (RSKT…TSIN), 1005-1068 (FRPH…CRSN), 1086-1179 (SRTR…SENA), and 1191-1223 (TTSH…DSSI). Residues 339–350 (YNHPTKAQTIPE) are compositionally biased toward polar residues. Basic residues predominate over residues 428 to 437 (RCRSVQKKKE). 2 stretches are compositionally biased toward basic and acidic residues: residues 443–472 (NKHD…VTKA) and 536–553 (PTKD…DNYP). Composition is skewed to polar residues over residues 583–595 (KNVS…TSPK) and 640–665 (KNHT…PTAF). Over residues 666–681 (NKSNNNKSITNSTSNS) the composition is skewed to low complexity. The span at 696–713 (NESKDPNRTCGKNSDKHL) shows a compositional bias: basic and acidic residues. Composition is skewed to low complexity over residues 720 to 756 (ASKR…SSRA) and 763 to 772 (RASSRAPSRA). Positions 773–790 (SSRDSSRASSRDSSRDSN) are enriched in basic and acidic residues. Positions 791–800 (RASSKASSRA) are enriched in low complexity. Over residues 801–814 (SSRDSSRASSRDSS) the composition is skewed to basic and acidic residues. Composition is skewed to low complexity over residues 826–884 (SRAS…SSRA) and 926–940 (SRAS…SSRA). Polar residues predominate over residues 955–965 (RQTPPHDTSIN). The interaction with human UBE2I stretch occupies residues 989-1037 (ARLQCFNHNDQFYNPRFRPHIRTNRKKSESTNDTDSESSMSRCKSHCRN). 3 stretches are compositionally biased toward low complexity: residues 1019–1029 (TNDTDSESSMS), 1053–1068 (GSSS…CRSN), and 1086–1110 (SRTR…STLK). The span at 1116–1131 (QNRDNKQIKSKSDSKH) shows a compositional bias: basic and acidic residues. A compositionally biased stretch (polar residues) spans 1162-1177 (HNSSPFNTHEQSNHSE). The span at 1195–1213 (LHQKQNVKLHNTKKCKKKR) shows a compositional bias: basic residues.

This sequence belongs to the herpesviridae IE2 family. Interacts with human UBE2I in the nucleus. Although this interaction does not promote IE2 sumoylation, it represses transactivation activity.

The protein resides in the host nucleus. Its function is as follows. Transcriptional transactivator. The polypeptide is Immediate-early protein 2 (U90/U86) (Homo sapiens (Human)).